The following is a 256-amino-acid chain: Imidazole glycerol phosphate synthase subunit HisF (256 aa).

Residues D12 and D131 contribute to the active site.

This sequence belongs to the HisA/HisF family. As to quaternary structure, heterodimer of HisH and HisF.

It is found in the cytoplasm. It catalyses the reaction 5-[(5-phospho-1-deoxy-D-ribulos-1-ylimino)methylamino]-1-(5-phospho-beta-D-ribosyl)imidazole-4-carboxamide + L-glutamine = D-erythro-1-(imidazol-4-yl)glycerol 3-phosphate + 5-amino-1-(5-phospho-beta-D-ribosyl)imidazole-4-carboxamide + L-glutamate + H(+). Its pathway is amino-acid biosynthesis; L-histidine biosynthesis; L-histidine from 5-phospho-alpha-D-ribose 1-diphosphate: step 5/9. Its function is as follows. IGPS catalyzes the conversion of PRFAR and glutamine to IGP, AICAR and glutamate. The HisF subunit catalyzes the cyclization activity that produces IGP and AICAR from PRFAR using the ammonia provided by the HisH subunit. The protein is Imidazole glycerol phosphate synthase subunit HisF of Thermobifida fusca (strain YX).